The primary structure comprises 94 residues: PTS system galactitol-specific EIIB component (94 aa).

In terms of domain architecture, PTS EIIB type-2 spans 1–94 (MKRKIIVACG…QNKILTILQG (94 aa)). Cys-9 functions as the Phosphocysteine intermediate; for EIIB activity in the catalytic mechanism. Position 9 is a phosphocysteine; by EIIA (Cys-9).

In terms of assembly, forms a complex with one each of subunit of GatA, GatB and 2 subunits of GatC.

The protein localises to the cytoplasm. The enzyme catalyses galactitol(out) + N(pros)-phospho-L-histidyl-[protein] = galactitol 1-phosphate(in) + L-histidyl-[protein]. The phosphoenolpyruvate-dependent sugar phosphotransferase system (PTS), a major carbohydrate active transport system, catalyzes the phosphorylation of incoming sugar substrates concomitant with their translocation across the cell membrane. The enzyme II complex composed of GatA, GatB and GatC is involved in galactitol transport. It can also use D-glucitol. This is PTS system galactitol-specific EIIB component from Escherichia coli (strain K12).